The sequence spans 130 residues: Small ribosomal subunit protein uS8 (130 aa).

This sequence belongs to the universal ribosomal protein uS8 family.

The protein is Small ribosomal subunit protein uS8 (RPS22) of Kluyveromyces marxianus (Yeast).